The chain runs to 410 residues: MKKEVVVIGGGIVGLSCAYSMHKLGHKVCVIEKNDGANGTSFGNAGLISAFKKAPLSCPGVVLDTLKLMLKNQAPLKFHFGLNLKLYQWILKFVKSANAKSTHRTMALFERYGWLSIDMYHQMLKDGMDFWYKEDGLLMIYTLEESFEKKLKTCDNSGAYKILSAKETKEYMPVVNDNICGSVLLTENAHVDPGEVMHSLQEYLQNVGVEFLYNEEVIDFEFKNNLIEGVITHKEKIQAETIILATGANPTLIKKTKNDFLMMGAKGYSITFKMPEELKPKTSSLFADIFMAMTPRRDTVRITSKLELNTNNALIDKEQIANMKKNLAAFTQPFEMKDAIEWCGFRPLTPNDIPYLGYDKRYKNLIHATGLGWLGITFGPAIGKIIANLSQDGANEKNADIMLFSAFFRD.

9 to 14 (GGGIVG) lines the FAD pocket.

Belongs to the DadA oxidoreductase family. It depends on FAD as a cofactor.

The protein resides in the cell inner membrane. The catalysed reaction is a D-alpha-amino acid + a quinone + H2O = a 2-oxocarboxylate + a quinol + NH4(+). Catalyzes the oxidative deamination of D-amino acids. Has broad substrate specificity; is mostly active on D-proline, and to a lesser extent, on several other D-amino acids such as D-alanine, D-phenylalanine and D-serine. Mediates electron transport from D-proline to coenzyme Q1 in vitro, and is involved in the electron transport chain from D-proline to the c-type cytochrome in vivo. The protein is D-amino acid dehydrogenase of Helicobacter pylori (strain ATCC 700392 / 26695) (Campylobacter pylori).